The sequence spans 239 residues: MRPSGRAADALRSISLTRHYTRHAEGSVLCAFGDTKVLCTASVLAKVPPHKKGSGEGWVTAEYGMLPRATHTRSDREAARGKQTGRTQEIQRLIGRAMRSVFDLAALGEYTVHLDCDVLQADGGTRTAAITGAFVAAHDAVSTMLRDGLIAASPIRDHVAAVSVGMVDGVPVLDLDYAEDSSCDTDMNVVMTGSGGFVEVQGTAEGAPFSRADLDAMTRLAEAGIARLVQHQREALGLA.

Phosphate-binding positions include arginine 86 and 124–126; that span reads GTR.

Belongs to the RNase PH family. As to quaternary structure, homohexameric ring arranged as a trimer of dimers.

It carries out the reaction tRNA(n+1) + phosphate = tRNA(n) + a ribonucleoside 5'-diphosphate. Its function is as follows. Phosphorolytic 3'-5' exoribonuclease that plays an important role in tRNA 3'-end maturation. Removes nucleotide residues following the 3'-CCA terminus of tRNAs; can also add nucleotides to the ends of RNA molecules by using nucleoside diphosphates as substrates, but this may not be physiologically important. Probably plays a role in initiation of 16S rRNA degradation (leading to ribosome degradation) during starvation. The sequence is that of Ribonuclease PH from Cupriavidus necator (strain ATCC 17699 / DSM 428 / KCTC 22496 / NCIMB 10442 / H16 / Stanier 337) (Ralstonia eutropha).